A 526-amino-acid chain; its full sequence is Delayed-rectifier potassium channel regulatory subunit KCNS1 (526 aa).

Topologically, residues 1–217 are cytoplasmic; it reads MLMLLVRGTH…LTMENPGYSL (217 aa). A helical transmembrane segment spans residues 218–239; it reads PSKLFSCVSISVVLASIAAMCI. The Extracellular segment spans residues 240 to 270; that stretch reads HSLPEYQAREAAAAVAAVAAGRSPEGVRDDP. The chain crosses the membrane as a helical span at residues 271–293; that stretch reads VLRRLEYFCIAWFSFEVSSRLLL. The Cytoplasmic portion of the chain corresponds to 294 to 304; that stretch reads APSTRNFFCHP. A helical transmembrane segment spans residues 305 to 322; that stretch reads LNLIDIVSVLPFYLTLLA. The Extracellular portion of the chain corresponds to 323-337; the sequence is GVALGDQGGKEFGHL. The chain crosses the membrane as a helical; Voltage-sensor span at residues 338 to 358; that stretch reads GKVVQVFRLMRIFRVLKLARH. The Cytoplasmic portion of the chain corresponds to 359 to 373; it reads STGLRSLGATLKHSY. Residues 374-395 traverse the membrane as a helical segment; it reads REVGILLLYLAVGVSVFSGVAY. The Extracellular portion of the chain corresponds to 396–408; the sequence is TAEKEEDVGFNTI. Residues 409-420 constitute an intramembrane region (helical); that stretch reads PACWWWGTVSMT. The Selectivity filter signature appears at 421-426; the sequence is TVGYGD. The stretch at 421–428 is an intramembrane region; that stretch reads TVGYGDVV. Over 429 to 435 the chain is Extracellular; sequence PVTVAGK. Residues 436–464 traverse the membrane as a helical segment; it reads LAASGCILGGILVVALPITIIFNKFSHFY. The Cytoplasmic segment spans residues 465-526; that stretch reads RRQKALEAAV…PSEPPHPQRY (62 aa). The segment at 492–526 is disordered; that stretch reads VSEASLETSGETSQEGRSADLESQAPSEPPHPQRY. The span at 496-507 shows a compositional bias: polar residues; that stretch reads SLETSGETSQEG.

This sequence belongs to the potassium channel family. S (TC 1.A.1.2) subfamily. Kv9.1/KCNS1 sub-subfamily. As to quaternary structure, heterotetramer with KCNB1. Heterotetramer with KCNB2. Does not form homomultimers.

The protein localises to the cell membrane. Potassium channel regulatory subunit that modulate the delayed rectifier voltage-gated potassium channel activity of KCNB1 and KCNB2 by altering their kinetics, expression levels, and shifting the half-inactivation potential to more polarized values. While it does not form functional channels on its own, it can form functional heterotetrameric channels with KCNB1 and KCNB2. Each regulatory subunit has unique regulatory properties that can lead to extensive inhibition, significant changes in kinetics, and/or substantial shifts in the voltage dependencies of the inactivation process. This Gorilla gorilla gorilla (Western lowland gorilla) protein is Delayed-rectifier potassium channel regulatory subunit KCNS1.